We begin with the raw amino-acid sequence, 229 residues long: Multiple organellar RNA editing factor 5, chloroplastic/mitochondrial (229 aa).

The transit peptide at 1 to 57 (MAKTLARSTASRITKRLISTSGATTPSPSYILSRRSTPVFSHAVGFISSLNRFTTIR) directs the protein to the chloroplast and mitochondrion.

Belongs to the MORF family. As to quaternary structure, homodimer and heterodimers with MORF8/RIP1, MORF3/RIP3, MORF6/RIP6, MORF7/RIP7 and MORF9/RIP9.

It is found in the mitochondrion. The protein resides in the plastid. The protein localises to the chloroplast. Functionally, involved in organellar RNA editing. Required for the processing of few RNA editing sites in mitochondria. The polypeptide is Multiple organellar RNA editing factor 5, chloroplastic/mitochondrial (Arabidopsis thaliana (Mouse-ear cress)).